Reading from the N-terminus, the 171-residue chain is Small ribosomal subunit protein uS5 (171 aa).

One can recognise an S5 DRBM domain in the interval 14 to 77 (YIEKLVNIRR…DKARKAMKNV (64 aa)).

This sequence belongs to the universal ribosomal protein uS5 family. As to quaternary structure, part of the 30S ribosomal subunit. Contacts proteins S4 and S8.

Functionally, with S4 and S12 plays an important role in translational accuracy. Located at the back of the 30S subunit body where it stabilizes the conformation of the head with respect to the body. The sequence is that of Small ribosomal subunit protein uS5 from Vesicomyosocius okutanii subsp. Calyptogena okutanii (strain HA).